A 219-amino-acid chain; its full sequence is Ribose-5-phosphate isomerase A (219 aa).

Residues 28–31 (SGST), 81–84 (DGAD), and 94–97 (KGGG) contribute to the substrate site. Glutamate 103 (proton acceptor) is an active-site residue. Residue lysine 121 participates in substrate binding.

This sequence belongs to the ribose 5-phosphate isomerase family. Homodimer.

It carries out the reaction aldehydo-D-ribose 5-phosphate = D-ribulose 5-phosphate. Its pathway is carbohydrate degradation; pentose phosphate pathway; D-ribose 5-phosphate from D-ribulose 5-phosphate (non-oxidative stage): step 1/1. Catalyzes the reversible conversion of ribose-5-phosphate to ribulose 5-phosphate. This chain is Ribose-5-phosphate isomerase A, found in Actinobacillus succinogenes (strain ATCC 55618 / DSM 22257 / CCUG 43843 / 130Z).